We begin with the raw amino-acid sequence, 214 residues long: YINYKNMSHQHMLMMFNLLPVGSNISIWWNFGSMLLTCLVIQIMTGFFLAFHYTANINLAFSSIIHTSRDVPYGWIMQNTHAIGASLFFICIYIHIARGIYYGSYLNKEVWVSGTTLLILLMATAFFGYVLPWGQMSFWAATVITNLLTAIPYFGTTLTTWLWGGFAINDPTLTRFFALHFILPFTIISASSIHILLLHNEGSNNPLGSNSDID.

4 helical membrane-spanning segments follow: residues 31–51 (FGSMLLTCLVIQIMTGFFLAF), 75–96 (WIMQNTHAIGASLFFICIYIHI), 111–131 (WVSGTTLLILLMATAFFGYVL), and 176–196 (FFALHFILPFTIISASSIHIL). The heme b site is built by histidine 81 and histidine 95. Residues histidine 180 and histidine 194 each coordinate heme b. Histidine 199 lines the a ubiquinone pocket.

The protein belongs to the cytochrome b family. As to quaternary structure, the cytochrome bc1 complex contains 3 respiratory subunits (MT-CYB, CYC1 and UQCRFS1), 2 core proteins (UQCRC1 and UQCRC2) and probably 6 low-molecular weight proteins. Heme b serves as cofactor.

It is found in the mitochondrion inner membrane. Its function is as follows. Component of the ubiquinol-cytochrome c reductase complex (complex III or cytochrome b-c1 complex) that is part of the mitochondrial respiratory chain. The b-c1 complex mediates electron transfer from ubiquinol to cytochrome c. Contributes to the generation of a proton gradient across the mitochondrial membrane that is then used for ATP synthesis. This Gloydius blomhoffii (Mamushi) protein is Cytochrome b (MT-CYB).